Here is a 311-residue protein sequence, read N- to C-terminus: ATP synthase gamma chain (311 aa).

Belongs to the ATPase gamma chain family. In terms of assembly, F-type ATPases have 2 components, CF(1) - the catalytic core - and CF(0) - the membrane proton channel. CF(1) has five subunits: alpha(3), beta(3), gamma(1), delta(1), epsilon(1). CF(0) has three main subunits: a, b and c.

Its subcellular location is the cell membrane. Its function is as follows. Produces ATP from ADP in the presence of a proton gradient across the membrane. The gamma chain is believed to be important in regulating ATPase activity and the flow of protons through the CF(0) complex. The protein is ATP synthase gamma chain of Limosilactobacillus fermentum (strain NBRC 3956 / LMG 18251) (Lactobacillus fermentum).